A 205-amino-acid chain; its full sequence is Small ribosomal subunit protein uS4 (205 aa).

The interval 18 to 46 (NIWGRPKSPVNRREYGPGQHGQRRKGKLS) is disordered. The S4 RNA-binding domain occupies 94 to 157 (RRLDTVVYRA…KQLTFVLEAN (64 aa)).

Belongs to the universal ribosomal protein uS4 family. Part of the 30S ribosomal subunit. Contacts protein S5. The interaction surface between S4 and S5 is involved in control of translational fidelity.

Its function is as follows. One of the primary rRNA binding proteins, it binds directly to 16S rRNA where it nucleates assembly of the body of the 30S subunit. In terms of biological role, with S5 and S12 plays an important role in translational accuracy. The sequence is that of Small ribosomal subunit protein uS4 from Rhodopseudomonas palustris (strain BisB18).